A 254-amino-acid chain; its full sequence is Alcohol dehydrogenase (254 aa).

Residue 10–33 coordinates NAD(+); the sequence is FVAGLGGIGLDTSRELVKRNLKNL. Ser138 is a substrate binding site. The active-site Proton acceptor is Tyr151.

Belongs to the short-chain dehydrogenases/reductases (SDR) family. Homodimer.

The enzyme catalyses a primary alcohol + NAD(+) = an aldehyde + NADH + H(+). The catalysed reaction is a secondary alcohol + NAD(+) = a ketone + NADH + H(+). The protein is Alcohol dehydrogenase (Adh) of Drosophila pseudoobscura pseudoobscura (Fruit fly).